A 355-amino-acid polypeptide reads, in one-letter code: Isopentenyl-diphosphate delta-isomerase (355 aa).

12 to 13 (RK) contributes to the substrate binding site. Residues Ser-70, 71 to 73 (SMT), Ser-101, and Asn-130 contribute to the FMN site. 101–103 (SMR) contributes to the substrate binding site. Residue Gln-165 coordinates substrate. Residue Glu-166 participates in Mg(2+) binding. Residues Lys-197 and 308 to 309 (AG) contribute to the FMN site.

Belongs to the IPP isomerase type 2 family. In terms of assembly, homooctamer. Dimer of tetramers. Requires FMN as cofactor. It depends on NADPH as a cofactor. Mg(2+) is required as a cofactor.

The protein localises to the cytoplasm. It catalyses the reaction isopentenyl diphosphate = dimethylallyl diphosphate. Its function is as follows. Involved in the biosynthesis of isoprenoids. Catalyzes the 1,3-allylic rearrangement of the homoallylic substrate isopentenyl (IPP) to its allylic isomer, dimethylallyl diphosphate (DMAPP). This is Isopentenyl-diphosphate delta-isomerase from Chlorobium phaeovibrioides (strain DSM 265 / 1930) (Prosthecochloris vibrioformis (strain DSM 265)).